Consider the following 107-residue polypeptide: MWILSNLMGTSEEGNLLSTVSPTVKALFGKTRVSPIFPFSPRSPFQPLIPRTPGSPWGPVGPASPLGPGFPIGPMGPGKPVGPKGPMLPLGPSGPVGPTSPLFPFCP.

Residues 47–107 (PLIPRTPGSP…PTSPLFPFCP (61 aa)) are disordered. A compositionally biased stretch (low complexity) spans 81–100 (VGPKGPMLPLGPSGPVGPTS).

As to expression, expressed in prostate and testis. Weakly or not expressed in other tissues. Overexpressed in prostate cancers.

The protein resides in the cytoplasm. Its function is as follows. May be involved in growth and survival of prostate cancer cells through the TAF-Ibeta pathway. The sequence is that of Prostate collagen triple helix protein (PCOTH) from Homo sapiens (Human).